The following is a 265-amino-acid chain: Putative 2-aminoethylphosphonate transport system permease protein PhnV (265 aa).

The next 6 membrane-spanning stretches (helical) occupy residues 13–33 (GVVA…VILM), 69–89 (LTIG…AALA), 104–124 (VFYL…LVAF), 131–151 (MNGT…AFTF), 185–205 (LPLL…LSMG), and 233–253 (NIAD…LLMM). The ABC transmembrane type-1 domain occupies 65–253 (LLASLTIGFC…LVAITLLLMM (189 aa)).

It belongs to the binding-protein-dependent transport system permease family.

The protein localises to the cell inner membrane. In terms of biological role, probably part of the PhnSTUV complex (TC 3.A.1.11.5) involved in 2-aminoethylphosphonate import. Probably responsible for the translocation of the substrate across the membrane. In Salmonella choleraesuis (strain SC-B67), this protein is Putative 2-aminoethylphosphonate transport system permease protein PhnV (phnV).